The following is a 230-amino-acid chain: MKSNMNTKILRLAVVEILSQSGFDKTADQALNVLTDILRYYIEHLGCRMRRKGENGIVPELICRFLVDEEYGECEYQIPELLSFLRYQVTVKNYLNDRYSVGSEESILHILRVLPKNAQLRMVMRNGGNLNDMNEVEKEVVEEDVRLDEFTKEFVESSLQKAGKREVREYRLESVDLIDGEPARRVKIGDGEFNAILDQKQNGIDFLEEPGVLARDFAIWNNRHVFKGYE.

This is an uncharacterized protein from Encephalitozoon cuniculi (strain GB-M1) (Microsporidian parasite).